We begin with the raw amino-acid sequence, 531 residues long: Apolipoprotein N-acyltransferase (531 aa).

7 helical membrane-spanning segments follow: residues 8–28, 34–54, 69–89, 105–125, 136–156, 178–198, and 206–226; these read IILL…LLAV, FGIF…IDGV, PAAI…WWLG, LTVV…VVIA, IAAL…LFTG, VVNL…PALI, and AGLA…FYRL. In terms of domain architecture, CN hydrolase spans 243-493; that stretch reads VQPVIDQAKK…RGVIDTILPG (251 aa). The active-site Proton acceptor is the Glu287. Residue Lys351 is part of the active site. Cys405 functions as the Nucleophile in the catalytic mechanism. The helical transmembrane segment at 507–527 threads the bilayer; the sequence is IFWLTTGILFLVAAISRLGFN.

It belongs to the CN hydrolase family. Apolipoprotein N-acyltransferase subfamily.

It localises to the cell inner membrane. It catalyses the reaction N-terminal S-1,2-diacyl-sn-glyceryl-L-cysteinyl-[lipoprotein] + a glycerophospholipid = N-acyl-S-1,2-diacyl-sn-glyceryl-L-cysteinyl-[lipoprotein] + a 2-acyl-sn-glycero-3-phospholipid + H(+). Its pathway is protein modification; lipoprotein biosynthesis (N-acyl transfer). In terms of biological role, catalyzes the phospholipid dependent N-acylation of the N-terminal cysteine of apolipoprotein, the last step in lipoprotein maturation. The protein is Apolipoprotein N-acyltransferase of Rhizobium meliloti (strain 1021) (Ensifer meliloti).